The sequence spans 118 residues: Cell division protein FtsB (118 aa).

At 1-6 (MRNWRW) the chain is on the cytoplasmic side. A helical transmembrane segment spans residues 7-24 (LLLVLAALLSWLQHRFWF). Residues 25–118 (GPGNSGEVRM…DLAQPRREKR (94 aa)) are Periplasmic-facing. A coiled-coil region spans residues 30-66 (GEVRMLQVQIVQQHQENERLRQRNASLAAEVKNLKDG). The tract at residues 97 to 118 (PLPNDTSADHGVDLAQPRREKR) is disordered. The segment covering 103 to 118 (SADHGVDLAQPRREKR) has biased composition (basic and acidic residues).

Belongs to the FtsB family. In terms of assembly, part of a complex composed of FtsB, FtsL and FtsQ.

It is found in the cell inner membrane. Essential cell division protein. May link together the upstream cell division proteins, which are predominantly cytoplasmic, with the downstream cell division proteins, which are predominantly periplasmic. This is Cell division protein FtsB from Xylella fastidiosa (strain 9a5c).